The following is a 305-amino-acid chain: MAREDSVRCLRCLLYALNLLFWLMSISVLGVSAWIRDYLNNVLTLTAETRVEEAVILTYFPVVHPVMIAVCCFLILVGMLGYCGTVKRNLLLLVWYFGSLLVIFCVELACGVWTYEQEITVPVQWSDMITLKARMTNYGLPRYQWLTHAWNFFQREFKCCGVVYFTDWLEMTEMDWPPDSCCVREFPGCSKQAHHEDLSDLYQEGCGKKMYTFLRGTKQLQVLRFLGISIGVTQILAMILTITLLWALYYDRRDPGADQIMSLKNDTSQQLSCHSVELLKPSLTGIFEHTSMANSFNTHFEMEEL.

At 1 to 12 (MAREDSVRCLRC) the chain is on the cytoplasmic side. 2 S-palmitoyl cysteine lipidation sites follow: Cys9 and Cys12. Residues 13 to 33 (LLYALNLLFWLMSISVLGVSA) form a helical membrane-spanning segment. The Extracellular segment spans residues 34 to 59 (WIRDYLNNVLTLTAETRVEEAVILTY). A helical transmembrane segment spans residues 60–80 (FPVVHPVMIAVCCFLILVGML). Residues 81 to 89 (GYCGTVKRN) are Cytoplasmic-facing. Cys83 carries the S-palmitoyl cysteine lipid modification. A helical transmembrane segment spans residues 90 to 110 (LLLLVWYFGSLLVIFCVELAC). Topologically, residues 111 to 224 (GVWTYEQEIT…RGTKQLQVLR (114 aa)) are extracellular. The helical transmembrane segment at 225–245 (FLGISIGVTQILAMILTITLL) threads the bilayer. Residues 246-305 (WALYYDRRDPGADQIMSLKNDTSQQLSCHSVELLKPSLTGIFEHTSMANSFNTHFEMEEL) are Cytoplasmic-facing.

This sequence belongs to the tetraspanin (TM4SF) family. Component of a complex, at least composed of TSPAN12, FZD4 and norrin (NDP). Post-translationally, palmitoylated; required for interaction with ADAM10. The precise position of palmitoylated residues is unclear and occurs either on Cys-9, Cys-12 and/or Cys-83.

It localises to the cell membrane. Regulator of cell surface receptor signal transduction. Plays a central role in retinal vascularization by regulating norrin (NDP) signal transduction. Acts in concert with norrin (NDP) to promote FZD4 multimerization and subsequent activation of FZD4, leading to promote accumulation of beta-catenin (CTNNB1) and stimulate LEF/TCF-mediated transcriptional programs. Suprisingly, it only activates the norrin (NDP)-dependent activation of FZD4, while it does not activate the Wnt-dependent activation of FZD4, suggesting the existence of a Wnt-independent signaling that also promote accumulation the beta-catenin (CTNNB1). The protein is Tetraspanin-12 (TSPAN12) of Gallus gallus (Chicken).